Here is a 160-residue protein sequence, read N- to C-terminus: Negative modulator of initiation of replication (160 aa).

This sequence belongs to the SeqA family. Homodimer. Polymerizes to form helical filaments.

The protein resides in the cytoplasm. Negative regulator of replication initiation, which contributes to regulation of DNA replication and ensures that replication initiation occurs exactly once per chromosome per cell cycle. Binds to pairs of hemimethylated GATC sequences in the oriC region, thus preventing assembly of replication proteins and re-initiation at newly replicated origins. Repression is relieved when the region becomes fully methylated. This is Negative modulator of initiation of replication from Idiomarina loihiensis (strain ATCC BAA-735 / DSM 15497 / L2-TR).